The chain runs to 368 residues: Trans-enoyl reductase TwmE (368 aa).

An NADP(+)-binding site is contributed by 49–52 (SDYK). Substrate is bound at residue 135 to 142 (FKAATLGT). NADP(+) contacts are provided by residues 204-207 (SPRS), Tyr222, and 269-270 (LE). 290–294 (SAELY) is a binding site for substrate. 360–361 (HP) contributes to the NADP(+) binding site.

Belongs to the zinc-containing alcohol dehydrogenase family. In terms of assembly, monomer.

It participates in secondary metabolite biosynthesis. Functionally, trans-enoyl reductase; part of the gene cluster that mediates the biosynthesis of wortmanamides A and B, reduced long-chain polyketides amidated with a specific omega-amino acid, 5-aminopentanoic acid (5PA). The PKS modules of TwmB are involved in the synthesis of the polyketide backbone, whereas the non-canonical C domain of TwmB is a bonafide condensation domain that specifically selects 5PA and catalyzes amidation to release polyketide chain. The C domain clearly prefers C16 and C18 fatty acyl substrates, which is consistent with simultaneous formation of both octaketide and nonaketide acyl amides wortmanamides A and B. Because TwmB lacks a designated enoylreductase (ER) domain, the required activity is provided the enoyl reductase TwmE. The roles of the remaining enzymes have still to be clarified. The chain is Trans-enoyl reductase TwmE from Talaromyces wortmannii (Penicillium wortmannii).